Consider the following 121-residue polypeptide: Small ribosomal subunit protein bS6 (121 aa).

It belongs to the bacterial ribosomal protein bS6 family.

Its function is as follows. Binds together with bS18 to 16S ribosomal RNA. The polypeptide is Small ribosomal subunit protein bS6 (Rickettsia canadensis (strain McKiel)).